A 432-amino-acid polypeptide reads, in one-letter code: D-amino acid dehydrogenase (432 aa).

Residue 3–17 participates in FAD binding; it reads VVVLGSGVVGVTSAW.

This sequence belongs to the DadA oxidoreductase family. FAD serves as cofactor.

It carries out the reaction a D-alpha-amino acid + A + H2O = a 2-oxocarboxylate + AH2 + NH4(+). It participates in amino-acid degradation; D-alanine degradation; NH(3) and pyruvate from D-alanine: step 1/1. Oxidative deamination of D-amino acids. This is D-amino acid dehydrogenase from Enterobacter sp. (strain 638).